Reading from the N-terminus, the 61-residue chain is Small ribosomal subunit protein uS14 (61 aa).

4 residues coordinate Zn(2+): C24, C27, C40, and C43.

It belongs to the universal ribosomal protein uS14 family. Zinc-binding uS14 subfamily. In terms of assembly, part of the 30S ribosomal subunit. Contacts proteins S3 and S10. Requires Zn(2+) as cofactor.

Binds 16S rRNA, required for the assembly of 30S particles and may also be responsible for determining the conformation of the 16S rRNA at the A site. In Nitratiruptor sp. (strain SB155-2), this protein is Small ribosomal subunit protein uS14.